A 308-amino-acid polypeptide reads, in one-letter code: Uricase-2 (308 aa).

Residues K17 and T63 each act as charge relay system in the active site. Urate is bound by residues T63, D64, F165, R182, V237, Q238, and N264. Residue H266 is the Charge relay system of the active site. Positions 306–308 (SKL) match the Microbody targeting signal motif.

Belongs to the uricase family. Homotetramer. In terms of tissue distribution, expressed predominantly in the uninfected cells of the central tissue of the root nodule. Also expressed in the nodule parenchyma cells and vascular tissue, in the roots, stems and leaves of uninfected adult plants, and in the cotyledons, roots and hypocotyls of developing seedlings. Localized to the metaxylem parenchyma cells and phloem fibers of developing roots.

The protein resides in the peroxisome. It catalyses the reaction urate + O2 + H2O = 5-hydroxyisourate + H2O2. It participates in purine metabolism; urate degradation; (S)-allantoin from urate: step 1/3. In terms of biological role, catalyzes the oxidation of uric acid to 5-hydroxyisourate, which is further processed to form (S)-allantoin. This is Uricase-2 (URIII) from Phaseolus vulgaris (Kidney bean).